The following is a 460-amino-acid chain: Cysteine--tRNA ligase (460 aa).

Cysteine 28 contributes to the Zn(2+) binding site. A 'HIGH' region motif is present at residues 30-40 (VTIYDLCHIGH). Residues cysteine 209, histidine 234, and glutamate 238 each coordinate Zn(2+). Residues 266-270 (KMSKS) carry the 'KMSKS' region motif. Lysine 269 provides a ligand contact to ATP.

The protein belongs to the class-I aminoacyl-tRNA synthetase family. Monomer. It depends on Zn(2+) as a cofactor.

It is found in the cytoplasm. It carries out the reaction tRNA(Cys) + L-cysteine + ATP = L-cysteinyl-tRNA(Cys) + AMP + diphosphate. This Vibrio vulnificus (strain CMCP6) protein is Cysteine--tRNA ligase.